A 54-amino-acid polypeptide reads, in one-letter code: Beta-2-microglobulin (54 aa).

The 39-residue stretch at 3–41 folds into the Ig-like C1-type domain; that stretch reads KVELSDLSFNKDWSFYLLAHREFVPTATDKYACRVSHIT.

The protein belongs to the beta-2-microglobulin family. Heterodimer of an alpha chain and a beta chain. Beta-2-microglobulin is the beta-chain of major histocompatibility complex class I molecules.

The protein localises to the secreted. Its function is as follows. Component of the class I major histocompatibility complex (MHC). Involved in the presentation of peptide antigens to the immune system. In Mesocricetus auratus (Golden hamster), this protein is Beta-2-microglobulin (B2M).